Reading from the N-terminus, the 450-residue chain is Akuammiline synthase 2 (450 aa).

The active-site Proton acceptor is the histidine 154. Residues 218–225 (MRRFVFDA) carry the Nuclear localization signal motif. Aspartate 376 acts as the Proton acceptor in catalysis.

Belongs to the plant acyltransferase family. Monomer.

It is found in the cytoplasm. Its subcellular location is the nucleus. The catalysed reaction is rhazimol + acetyl-CoA = akuammiline + CoA + H(+). The protein operates within alkaloid biosynthesis. Functionally, acyltransferase involved in the biosynthesis of akuammilan monoterpene indole alkaloids (MIAs) natural products, components with various biological properties such as antidiabetic, antibacterial, anti-inflammatory, anticancer, and antimalarial activities. Catalyzes the conversion of rhazimol to akuammiline. The polypeptide is Akuammiline synthase 2 (Alstonia scholaris (Dogbane)).